A 572-amino-acid chain; its full sequence is Mitochondrial chaperone TCM62 (572 aa).

The N-terminal 16 residues, 1 to 16, are a transit peptide targeting the mitochondrion; that stretch reads MLRNCLRKLGNHQTKC. The Mitochondrial matrix portion of the chain corresponds to 17–471; sequence SVKTLHTPIY…KANEPNFMTK (455 aa). Residues 472 to 488 form a helical membrane-spanning segment; the sequence is VGINAVLSAVILPSEVA. Residues 489–572 are Mitochondrial intermembrane-facing; sequence FKNAYGYNYY…VYKKPERHKA (84 aa).

The protein belongs to the chaperonin (HSP60) family. As to quaternary structure, forms a high molecular mass protein complex of approximately 850 kDa.

The protein resides in the mitochondrion inner membrane. Chaperone. Required for the assembly of succinate dehydrogenase subunits. Ensures mitochondrial gene expression at elevated temperatures and prevents heat-aggregation of the ribosomal subunit VAR1. In Saccharomyces cerevisiae (strain ATCC 204508 / S288c) (Baker's yeast), this protein is Mitochondrial chaperone TCM62 (TCM62).